The sequence spans 261 residues: Na(+)-translocating NADH-quinone reductase subunit C (261 aa).

Residues 12-32 (LGVVVGLSLVCSIIVSTAAVG) form a helical membrane-spanning segment. Position 229 is an FMN phosphoryl threonine (Thr229).

As to quaternary structure, composed of six subunits; NqrA, NqrB, NqrC, NqrD, NqrE and NqrF. The cofactor is FMN.

Its subcellular location is the cell inner membrane. The catalysed reaction is a ubiquinone + n Na(+)(in) + NADH + H(+) = a ubiquinol + n Na(+)(out) + NAD(+). Its function is as follows. NQR complex catalyzes the reduction of ubiquinone-1 to ubiquinol by two successive reactions, coupled with the transport of Na(+) ions from the cytoplasm to the periplasm. NqrA to NqrE are probably involved in the second step, the conversion of ubisemiquinone to ubiquinol. The protein is Na(+)-translocating NADH-quinone reductase subunit C of Vibrio campbellii (strain ATCC BAA-1116).